Here is an 889-residue protein sequence, read N- to C-terminus: Rho GTPase-activating protein 27 (889 aa).

An SH3 domain is found at 6 to 69 (VGDVYVLVEH…PAQYVRELPA (64 aa)). Residues 104 to 132 (AGPDGAPEESGGRASSLCGPAQRGAATQR) form a disordered region. A phosphoserine mark is found at Ser-156, Ser-216, and Ser-249. 2 WW domains span residues 246–280 (PLPS…SPFE) and 299–333 (VSLE…DEAE). The span at 329 to 341 (EDEAENEPEEELE) shows a compositional bias: acidic residues. Residues 329 to 397 (EDEAENEPEE…SPLTTPPGWS (69 aa)) are disordered. Residue Ser-347 is modified to Phosphoserine. Low complexity predominate over residues 383–395 (EPGPTSPLTTPPG). The region spanning 411–444 (HFTQEQWVRLEDPHGKPYFYNPEDSSVRWELPQV) is the WW 3 domain. A disordered region spans residues 447 to 474 (PAPRSIHKSSQDGDTPAQASPPEEKVPA). Position 456 is a phosphoserine (Ser-456). Residue Thr-461 is modified to Phosphothreonine. Ser-466 bears the Phosphoserine mark. The 117-residue stretch at 496–612 (TLDKAGVLHR…WHKAIAQGIQ (117 aa)) folds into the PH domain. Residues 617-655 (ELPPEESESSRVDFGSSERLGSWQEKEEDARPNAAAPAL) are disordered. The 190-residue stretch at 697–886 (CALAALCERE…LILQQCADIF (190 aa)) folds into the Rho-GAP domain.

In terms of assembly, interacts with SH3KBP1/CIN85. In terms of tissue distribution, expressed in germinal center B-cell, spleen, chronic lymphocytic leukemia, pancreatic cancer and lung cancer.

The protein resides in the cytoplasm. It localises to the membrane. Functionally, rho GTPase-activating protein which may be involved in clathrin-mediated endocytosis. GTPase activators for the Rho-type GTPases act by converting them to an inactive GDP-bound state. Has activity toward CDC42 and RAC1. This is Rho GTPase-activating protein 27 from Homo sapiens (Human).